The primary structure comprises 244 residues: Orotidine 5'-phosphate decarboxylase (244 aa).

Substrate contacts are provided by residues D18, K43, 73–82 (DLKLADIGYI), S130, 182–192 (PGVGAQGGKPG), G206, and R207. The active-site Proton donor is the K75.

This sequence belongs to the OMP decarboxylase family. Type 1 subfamily. Homodimer.

The catalysed reaction is orotidine 5'-phosphate + H(+) = UMP + CO2. Its pathway is pyrimidine metabolism; UMP biosynthesis via de novo pathway; UMP from orotate: step 2/2. Catalyzes the decarboxylation of orotidine 5'-monophosphate (OMP) to uridine 5'-monophosphate (UMP). The sequence is that of Orotidine 5'-phosphate decarboxylase from Aeropyrum pernix (strain ATCC 700893 / DSM 11879 / JCM 9820 / NBRC 100138 / K1).